The sequence spans 266 residues: tRNA pseudouridine synthase A (266 aa).

Aspartate 51 serves as the catalytic Nucleophile. Residue tyrosine 106 participates in substrate binding.

The protein belongs to the tRNA pseudouridine synthase TruA family.

It carries out the reaction uridine(38/39/40) in tRNA = pseudouridine(38/39/40) in tRNA. In terms of biological role, formation of pseudouridine at positions 38, 39 and 40 in the anticodon stem and loop of transfer RNAs. The chain is tRNA pseudouridine synthase A from Pyrococcus furiosus (strain ATCC 43587 / DSM 3638 / JCM 8422 / Vc1).